Consider the following 174-residue polypeptide: Interferon gamma (174 aa).

Positions 1–23 (MNSTRCILALLLCLTQAMSGCYG) are cleaved as a signal peptide. At glutamine 24 the chain carries Pyrrolidone carboxylic acid. N-linked (GlcNAc...) asparagine glycosylation is found at asparagine 39 and asparagine 106.

This sequence belongs to the type II (or gamma) interferon family. Homodimer. Interacts with IFNGR1 (via extracellular domain); this interaction promotes IFNGR1 dimerization. Released primarily from activated T lymphocytes.

Its subcellular location is the secreted. In terms of biological role, type II interferon produced by immune cells such as T-cells and NK cells that plays crucial roles in antimicrobial, antiviral, and antitumor responses by activating effector immune cells and enhancing antigen presentation. Primarily signals through the JAK-STAT pathway after interaction with its receptor IFNGR1 to affect gene regulation. Upon IFNG binding, IFNGR1 intracellular domain opens out to allow association of downstream signaling components JAK2, JAK1 and STAT1, leading to STAT1 activation, nuclear translocation and transcription of IFNG-regulated genes. Many of the induced genes are transcription factors such as IRF1 that are able to further drive regulation of a next wave of transcription. Plays a role in class I antigen presentation pathway by inducing a replacement of catalytic proteasome subunits with immunoproteasome subunits. In turn, increases the quantity, quality, and repertoire of peptides for class I MHC loading. Increases the efficiency of peptide generation also by inducing the expression of activator PA28 that associates with the proteasome and alters its proteolytic cleavage preference. Up-regulates as well MHC II complexes on the cell surface by promoting expression of several key molecules such as cathepsins B/CTSB, H/CTSH, and L/CTSL. Participates in the regulation of hematopoietic stem cells during development and under homeostatic conditions by affecting their development, quiescence, and differentiation. The chain is Interferon gamma (IFNG) from Phodopus sungorus (Striped hairy-footed hamster).